The chain runs to 352 residues: Photosystem II D2 protein (352 aa).

At Thr2 the chain carries N-acetylthreonine. At Thr2 the chain carries Phosphothreonine. Residues 40-60 (CAYFAVGGWLTGTTFVTSWYT) traverse the membrane as a helical segment. His117 contacts chlorophyll a. The chain crosses the membrane as a helical span at residues 124–140 (GFMLRQFEIARAIGLRP). Gln129 and Asn142 together coordinate pheophytin a. Residues 152–165 (VFVSVFLIYPLGQS) traverse the membrane as a helical segment. Residue His197 coordinates chlorophyll a. A helical transmembrane segment spans residues 207-227 (AALLCAIHGATVENTLFEDGD). The a plastoquinone site is built by His214 and Phe261. A Fe cation-binding site is contributed by His214. His268 lines the Fe cation pocket. A helical membrane pass occupies residues 278–294 (GLWMSAIGVVGLALNLR).

This sequence belongs to the reaction center PufL/M/PsbA/D family. PSII is composed of 1 copy each of membrane proteins PsbA, PsbB, PsbC, PsbD, PsbE, PsbF, PsbH, PsbI, PsbJ, PsbK, PsbL, PsbM, PsbT, PsbX, PsbY, PsbZ, Psb30/Ycf12, at least 3 peripheral proteins of the oxygen-evolving complex and a large number of cofactors. It forms dimeric complexes. The cofactor is The D1/D2 heterodimer binds P680, chlorophylls that are the primary electron donor of PSII, and subsequent electron acceptors. It shares a non-heme iron and each subunit binds pheophytin, quinone, additional chlorophylls, carotenoids and lipids. There is also a Cl(-1) ion associated with D1 and D2, which is required for oxygen evolution. The PSII complex binds additional chlorophylls, carotenoids and specific lipids..

It is found in the plastid. Its subcellular location is the chloroplast thylakoid membrane. It carries out the reaction 2 a plastoquinone + 4 hnu + 2 H2O = 2 a plastoquinol + O2. In terms of biological role, photosystem II (PSII) is a light-driven water:plastoquinone oxidoreductase that uses light energy to abstract electrons from H(2)O, generating O(2) and a proton gradient subsequently used for ATP formation. It consists of a core antenna complex that captures photons, and an electron transfer chain that converts photonic excitation into a charge separation. The D1/D2 (PsbA/PsbD) reaction center heterodimer binds P680, the primary electron donor of PSII as well as several subsequent electron acceptors. D2 is needed for assembly of a stable PSII complex. This Nephroselmis olivacea (Green alga) protein is Photosystem II D2 protein.